The primary structure comprises 332 residues: Torsin-1A (332 aa).

The signal sequence occupies residues 1-20 (MKLGRAALGLLLLAPSVVQA). The tract at residues 91-251 (KPKKPLTLSL…VSVFNNKNSG (161 aa)) is interaction with SNAPIN. Residue 102 to 109 (GWTGTGKN) coordinates ATP. Asn-143 and Asn-158 each carry an N-linked (GlcNAc...) asparagine glycan. The interaction with KLC1 stretch occupies residues 251–332 (GFWHSSLIDR…FTKLDYYYDD (82 aa)). Positions 312–332 (RVFSDKGCKTVFTKLDYYYDD) are interaction with SYNE3.

This sequence belongs to the ClpA/ClpB family. Torsin subfamily. Homohexamer. Interacts with TOR1B; the interaction may be specific of neural tissues. Interacts (ATP-bound) with TOR1AIP1 and TOR1AIP2; the interactions induce ATPase activity. Interacts with KLHL14; preferentially when ATP-free. Interacts with KLC1 (via TPR repeats); the interaction associates TOR1A with the kinesin oligomeric complex. Interacts with COPS4; the interaction associates TOR1A with the CSN complex. Interacts with SNAPIN; the interaction is direct and associates SNAPIN with the CSN complex. Interacts with STON2. Interacts (ATP-bound) with SYNE3 (via KASH domain); the interaction is required for SYNE3 nuclear envelope localization. Interacts with VIM; the interaction associates TOR1A with the cytoskeleton. Interacts with PLEC. Interacts (ATP-bound) with SLC6A3; regulates SLC6A3 transport to the plasma membrane. N-glycosylated.

It localises to the endoplasmic reticulum lumen. The protein localises to the nucleus membrane. The protein resides in the cell projection. Its subcellular location is the growth cone. It is found in the cytoplasmic vesicle membrane. It localises to the cytoplasmic vesicle. The protein localises to the secretory vesicle. The protein resides in the synaptic vesicle. Its subcellular location is the cytoplasm. It is found in the cytoskeleton. It catalyses the reaction ATP + H2O = ADP + phosphate + H(+). Its function is as follows. Protein with chaperone functions important for the control of protein folding, processing, stability and localization as well as for the reduction of misfolded protein aggregates. Involved in the regulation of synaptic vesicle recycling, controls STON2 protein stability in collaboration with the COP9 signalosome complex (CSN). In the nucleus, may link the cytoskeleton with the nuclear envelope, this mechanism seems to be crucial for the control of nuclear polarity, cell movement and, specifically in neurons, nuclear envelope integrity. Participates in the cellular trafficking and may regulate the subcellular location of multipass membrane proteins such as the dopamine transporter SLC6A3, leading to the modulation of dopamine neurotransmission. In the endoplasmic reticulum, plays a role in the quality control of protein folding by increasing clearance of misfolded proteins such as SGCE variants or holding them in an intermediate state for proper refolding. May have a redundant function with TOR1B in non-neural tissues. The sequence is that of Torsin-1A (TOR1A) from Macaca fascicularis (Crab-eating macaque).